Reading from the N-terminus, the 700-residue chain is MRLLICALLCLGTLGLCLALPEKTIRWCVVSDHEATKCSSFRDNMKKVLPAGGPAVTCVRKMSHPECIRDISANKVDAVTVDGALVAEADLPHHSLKPIMAEYYGSKDDPKTHYYVVAMAKKGTGFQLNQLRGKKSCHTGLGWSAGWYVPLSTLLPSGSRETAAATFFSSSCVPCADGKMFPSLCQLCAGKGTDKCACSSREPYFGSWGALKCLQDGTADVSFVKHLTVFEAMPTKADRDQYELLCMDNTRRPVEEYEQCYLARVPSHVVVARSVDGKEDSIQELLRVAQEHFGKDKSSPFQLFGSPHGEDLLFTDAAHGLLRVPRKIDISLYLGYEFLSAFRNLKRGLEDSQRVKWCAVGQQERTKCDQWSAVSGGALACATEETPEDCIAATMKGEADAMSLDGGFAYVAGHCGLVPVLAENYLSTHSSGRLGSKCVNAPLEGYYVVAVVKKSDVGITWKSLQGKKSCHTAVGTSEGWNVPMGLIYNQTGSCKFDAFFSRSCAPGSDPDSPLCALCVGGNNPAHMCAANNAEGYHGSSGALRCLVEKGDVAFMKHPTVLQNTDGKNPEPWAKGLKHEDFELLCLDGTRKPVTEAQSCHLARVPNRAVFSRKDKADFVRRILFNQQELFGRNGFEYMMFQMFESSAKDLLFSDDTECLSNLQNKTTYKTYLGPQYLTLMDNFRQCLSSELLDACTFHKY.

The N-terminal stretch at 1-19 is a signal peptide; sequence MRLLICALLCLGTLGLCLA. Transferrin-like domains are found at residues 25-347 and 355-685; these read IRWC…NLKR and VKWC…NFRQ. Disulfide bonds link Cys28–Cys67, Cys38–Cys58, Cys137–Cys213, Cys172–Cys188, Cys175–Cys198, Cys185–Cys196, Cys246–Cys260, Cys358–Cys390, Cys368–Cys381, Cys415–Cys695, Cys438–Cys658, Cys470–Cys545, Cys494–Cys686, Cys504–Cys518, Cys515–Cys528, and Cys585–Cys599. An N-linked (GlcNAc...) asparagine glycan is attached at Asn664.

The protein belongs to the transferrin family. In terms of assembly, monomer. Interacts (via transferrin-like domain 2) with CA2. Post-translationally, N-glycosylated. Detected in blood plasma, heart, kidney, liver, colon, lung, spleen, pancreas and testis (at protein level).

It is found in the secreted. Functionally, inhibitor for carbonic anhydrase 2 (CA2). Does not bind iron ions. The chain is Inhibitor of carbonic anhydrase from Mus musculus (Mouse).